The chain runs to 318 residues: Mechanosensory protein 3 (318 aa).

LIM zinc-binding domains are found at residues 27–86 (NKCY…DYSA) and 87–152 (HRCA…PMDD). A DNA-binding region (homeobox) is located at residues 214-273 (RRGPRTTIRQNQLDVLNEMFSNTPKPSKHARAKLALETGLSMRVIQVWFQNRRSKERRLK).

Its subcellular location is the nucleus. Its function is as follows. Specifies differentiation of the set of six touch receptor neurons. Binds cooperatively as a heterodimer with unc-86 to sites in the mec-3 gene promoter. The sequence is that of Mechanosensory protein 3 (mec-3) from Caenorhabditis briggsae.